The sequence spans 202 residues: MDAKRTPPPPTPPNPNPSVIGSGAAADGGGFGRGEAAAATKHMLAFHFLRALSRIHRATPVTRRTRTIRRAAYSSMARAASPRRAWSRALLGQVRARRSRTLMRRAAVLVRRRVVAAPAPSPASARGVRIIAAGETSAAARAVPPPPRQQGEPPRAEALRRLVPGGAGMEYSSLLEETADYLRSLRAQVQLMQGLVDLFSYQ.

A compositionally biased stretch (pro residues) spans 1–16 (MDAKRTPPPPTPPNPN). The tract at residues 1–33 (MDAKRTPPPPTPPNPNPSVIGSGAAADGGGFGR) is disordered. Residues 136 to 185 (TSAAARAVPPPPRQQGEPPRAEALRRLVPGGAGMEYSSLLEETADYLRSL) form the bHLH domain.

The protein belongs to the bHLH protein family. In terms of assembly, interacts with ILI1. Binds to ILI5/BUL1 and BC1. Interacts with BCL1 and BCL2. As to expression, highly expressed in roots and at lower levels in leaf blades, leaf sheaths, lamina joint, stems and panicles.

Functionally, atypical and probable non DNA-binding bHLH transcription factor that acts as a negative regulator of cell elongation and plant development. Binds the transcription factor ILI1 and forms a heterodimer of antagonistic bHLH transcription factors that function downstream of BZR1 to mediate brassinosteroid regulation of cell elongation and lamina inclination. This is Transcription factor IBH1 from Oryza sativa subsp. japonica (Rice).